Consider the following 258-residue polypeptide: MSARFGPEDLLACYRRGVFPMADSRDDPRLFLVDPDFRGILPLDAFHIPKRLKRRVCQDPYRVSFDTAFTRVVEACGEPHDNRPNTWINSPIVNLYSALHRQGFAHSVECWDGDQLVGGLYGVSLGGAFFGESMFSRATDASKIALVHLAARLIDRGYVLLDAQFHNPHLTQFGLIEISRDAFKARLKAALKVGADFHGGSDGPAPDQSIGMSSSGGVSDSVTPAGMSSYSGSSLSGMIARSGSFTGSGAVQRITQMS.

The interval 199-220 (GGSDGPAPDQSIGMSSSGGVSD) is disordered. The segment covering 209-220 (SIGMSSSGGVSD) has biased composition (low complexity).

The protein belongs to the L/F-transferase family.

Its subcellular location is the cytoplasm. The enzyme catalyses N-terminal L-lysyl-[protein] + L-leucyl-tRNA(Leu) = N-terminal L-leucyl-L-lysyl-[protein] + tRNA(Leu) + H(+). It carries out the reaction N-terminal L-arginyl-[protein] + L-leucyl-tRNA(Leu) = N-terminal L-leucyl-L-arginyl-[protein] + tRNA(Leu) + H(+). It catalyses the reaction L-phenylalanyl-tRNA(Phe) + an N-terminal L-alpha-aminoacyl-[protein] = an N-terminal L-phenylalanyl-L-alpha-aminoacyl-[protein] + tRNA(Phe). Its function is as follows. Functions in the N-end rule pathway of protein degradation where it conjugates Leu, Phe and, less efficiently, Met from aminoacyl-tRNAs to the N-termini of proteins containing an N-terminal arginine or lysine. The protein is Leucyl/phenylalanyl-tRNA--protein transferase of Hyphomonas neptunium (strain ATCC 15444).